Here is a 309-residue protein sequence, read N- to C-terminus: Small ribosomal subunit biogenesis GTPase RsgA (309 aa).

One can recognise a CP-type G domain in the interval Lys-88–Pro-247. Residues Thr-137–Asp-140 and Gly-189–Ser-197 each bind GTP. The Zn(2+) site is built by Cys-272, Cys-277, His-279, and Cys-285.

The protein belongs to the TRAFAC class YlqF/YawG GTPase family. RsgA subfamily. In terms of assembly, monomer. Associates with 30S ribosomal subunit, binds 16S rRNA. The cofactor is Zn(2+).

It localises to the cytoplasm. One of several proteins that assist in the late maturation steps of the functional core of the 30S ribosomal subunit. Helps release RbfA from mature subunits. May play a role in the assembly of ribosomal proteins into the subunit. Circularly permuted GTPase that catalyzes slow GTP hydrolysis, GTPase activity is stimulated by the 30S ribosomal subunit. In Prochlorococcus marinus (strain SARG / CCMP1375 / SS120), this protein is Small ribosomal subunit biogenesis GTPase RsgA.